Here is a 261-residue protein sequence, read N- to C-terminus: Ribosome biogenesis protein NSA2 (261 aa).

The interval 1 to 35 (MPQNEYIEQHIKQHGRRLDHEERKRKREAREAHKI) is disordered. Residues 7–35 (IEQHIKQHGRRLDHEERKRKREAREAHKI) show a composition bias toward basic and acidic residues. Short sequence motifs (nuclear localization signal) lie at residues 15–22 (GRRLDHEE) and 51–58 (AKKRYSEK). A disordered region spans residues 61–84 (MRKKIKAHEQSKVKGGSKPLDESG).

The protein belongs to the eukaryotic ribosomal protein eS8 family. Ribosome biogenesis protein NSA2 subfamily. Component of the pre-66S ribosomal particle. Interacts with NOP7 and RRP1. Interacts with RSA4 (via WD repeats).

It localises to the nucleus. The protein resides in the nucleolus. In terms of biological role, involved in the biogenesis of the 60S ribosomal subunit. May play a part in the quality control of pre-60S particles. This chain is Ribosome biogenesis protein NSA2 (NSA2), found in Vanderwaltozyma polyspora (strain ATCC 22028 / DSM 70294 / BCRC 21397 / CBS 2163 / NBRC 10782 / NRRL Y-8283 / UCD 57-17) (Kluyveromyces polysporus).